The primary structure comprises 117 residues: Large ribosomal subunit protein bL20c (117 aa).

Belongs to the bacterial ribosomal protein bL20 family.

The protein resides in the plastid. Its subcellular location is the chloroplast. Functionally, binds directly to 23S ribosomal RNA and is necessary for the in vitro assembly process of the 50S ribosomal subunit. It is not involved in the protein synthesizing functions of that subunit. This chain is Large ribosomal subunit protein bL20c, found in Morus indica (Mulberry).